The following is a 528-amino-acid chain: Phosphoenolpyruvate carboxykinase (ATP) (528 aa).

Substrate-binding residues include R56, Y192, and K198. Residues K198, H217, and 233-241 (GLSGTGKTT) each bind ATP. Positions 198 and 217 each coordinate Mn(2+). Mn(2+) is bound at residue D254. Residues E282, R319, and T444 each coordinate ATP. R319 is a binding site for substrate.

The protein belongs to the phosphoenolpyruvate carboxykinase (ATP) family. Mn(2+) is required as a cofactor.

The protein localises to the cytoplasm. It catalyses the reaction oxaloacetate + ATP = phosphoenolpyruvate + ADP + CO2. Its pathway is carbohydrate biosynthesis; gluconeogenesis. Its function is as follows. Involved in the gluconeogenesis. Catalyzes the conversion of oxaloacetate (OAA) to phosphoenolpyruvate (PEP) through direct phosphoryl transfer between the nucleoside triphosphate and OAA. The chain is Phosphoenolpyruvate carboxykinase (ATP) from Lysinibacillus sphaericus (strain C3-41).